Reading from the N-terminus, the 451-residue chain is Trigger factor (451 aa).

Positions Asp170–Pro256 constitute a PPIase FKBP-type domain.

The protein belongs to the FKBP-type PPIase family. Tig subfamily.

Its subcellular location is the cytoplasm. The enzyme catalyses [protein]-peptidylproline (omega=180) = [protein]-peptidylproline (omega=0). Involved in protein export. Acts as a chaperone by maintaining the newly synthesized protein in an open conformation. Functions as a peptidyl-prolyl cis-trans isomerase. The chain is Trigger factor from Treponema denticola (strain ATCC 35405 / DSM 14222 / CIP 103919 / JCM 8153 / KCTC 15104).